A 306-amino-acid chain; its full sequence is 26S proteasome regulatory subunit RPN11 (306 aa).

The 136-residue stretch at 27-162 (VYISSIALLK…IDAFRLIDTG (136 aa)) folds into the MPN domain. Zn(2+) contacts are provided by H109, H111, and D122. The short motif at 109–122 (HSHPGFGCWLSSVD) is the JAMM motif element.

Belongs to the peptidase M67A family.

Functionally, acts as a regulatory subunit of the 26 proteasome which is involved in the ATP-dependent degradation of ubiquitinated proteins. This is 26S proteasome regulatory subunit RPN11 (RPN11) from Candida glabrata (strain ATCC 2001 / BCRC 20586 / JCM 3761 / NBRC 0622 / NRRL Y-65 / CBS 138) (Yeast).